The primary structure comprises 120 residues: Large ribosomal subunit protein uL18 (120 aa).

Residues 1–22 (MKTTRKESLKRRHRRIRRKVSG) are disordered. Over residues 8-20 (SLKRRHRRIRRKV) the composition is skewed to basic residues.

The protein belongs to the universal ribosomal protein uL18 family. In terms of assembly, part of the 50S ribosomal subunit; part of the 5S rRNA/L5/L18/L25 subcomplex. Contacts the 5S and 23S rRNAs.

This is one of the proteins that bind and probably mediate the attachment of the 5S RNA into the large ribosomal subunit, where it forms part of the central protuberance. The polypeptide is Large ribosomal subunit protein uL18 (Crocosphaera subtropica (strain ATCC 51142 / BH68) (Cyanothece sp. (strain ATCC 51142))).